Here is a 28-residue protein sequence, read N- to C-terminus: Omega-agatoxin-Aa2a (28 aa).

It belongs to the neurotoxin 04 (omega-agtx) family. 03 (type II/III omega-agtx) subfamily. In terms of tissue distribution, expressed by the venom gland.

Its subcellular location is the secreted. In terms of biological role, omega-agatoxin are antagonist of voltage-gated calcium channels. They block insect neuromuscular transmission presynaptically. Potent blocker of N-type calcium channels (Cav2.2/CACNA1B). In Agelenopsis aperta (North American funnel-web spider), this protein is Omega-agatoxin-Aa2a.